Reading from the N-terminus, the 163-residue chain is Nucleotide-binding protein CJJ81176_0398 (163 aa).

Belongs to the YajQ family.

In terms of biological role, nucleotide-binding protein. This chain is Nucleotide-binding protein CJJ81176_0398, found in Campylobacter jejuni subsp. jejuni serotype O:23/36 (strain 81-176).